Reading from the N-terminus, the 218-residue chain is N-(5'-phosphoribosyl)anthranilate isomerase (218 aa).

Belongs to the TrpF family.

It catalyses the reaction N-(5-phospho-beta-D-ribosyl)anthranilate = 1-(2-carboxyphenylamino)-1-deoxy-D-ribulose 5-phosphate. It participates in amino-acid biosynthesis; L-tryptophan biosynthesis; L-tryptophan from chorismate: step 3/5. In Chelativorans sp. (strain BNC1), this protein is N-(5'-phosphoribosyl)anthranilate isomerase.